Consider the following 449-residue polypeptide: 23S rRNA (uracil(1939)-C(5))-methyltransferase RlmD (449 aa).

The TRAM domain occupies 12-70 (SKQLSAKQSFSVHQLDHLGAGIAQHQGKVVFIPGALPSETVQAQLTEQKKNYARAKLIK). The [4Fe-4S] cluster site is built by cysteine 83, cysteine 89, cysteine 92, and cysteine 170. S-adenosyl-L-methionine contacts are provided by glutamine 282, phenylalanine 311, asparagine 316, glutamate 332, aspartate 359, and aspartate 379. The Nucleophile role is filled by cysteine 405.

The protein belongs to the class I-like SAM-binding methyltransferase superfamily. RNA M5U methyltransferase family. RlmD subfamily.

It carries out the reaction uridine(1939) in 23S rRNA + S-adenosyl-L-methionine = 5-methyluridine(1939) in 23S rRNA + S-adenosyl-L-homocysteine + H(+). In terms of biological role, catalyzes the formation of 5-methyl-uridine at position 1939 (m5U1939) in 23S rRNA. The protein is 23S rRNA (uracil(1939)-C(5))-methyltransferase RlmD of Shewanella sp. (strain MR-4).